The primary structure comprises 206 residues: Potassium-transporting ATPase KdpC subunit (206 aa).

Residues 14 to 34 (VLAVFTLFGLGLAYSLIATGI) traverse the membrane as a helical segment.

It belongs to the KdpC family. As to quaternary structure, the system is composed of three essential subunits: KdpA, KdpB and KdpC.

Its subcellular location is the cell inner membrane. Functionally, part of the high-affinity ATP-driven potassium transport (or Kdp) system, which catalyzes the hydrolysis of ATP coupled with the electrogenic transport of potassium into the cytoplasm. This subunit acts as a catalytic chaperone that increases the ATP-binding affinity of the ATP-hydrolyzing subunit KdpB by the formation of a transient KdpB/KdpC/ATP ternary complex. This Xanthomonas axonopodis pv. citri (strain 306) protein is Potassium-transporting ATPase KdpC subunit.